The primary structure comprises 319 residues: Histone-lysine N-methyltransferase set5 (319 aa).

Residues 4-141 enclose the SET domain; it reads YETEIYKVVP…AGEEILTTYI (138 aa). Phosphoserine is present on Ser316. At Thr318 the chain carries Phosphothreonine.

This sequence belongs to the class V-like SAM-binding methyltransferase superfamily.

The protein localises to the nucleus. The protein resides in the chromosome. It is found in the cytoplasm. It catalyses the reaction L-lysyl-[histone] + S-adenosyl-L-methionine = N(6)-methyl-L-lysyl-[histone] + S-adenosyl-L-homocysteine + H(+). Histone methyltransferase that monomethylates 'Lys-5', 'Lys-8' and 'Lys-12' of histone H4 (H4K5me1, H4K8me1 and H4K12me1, respectively), thereby controlling gene expression and remodeling chromatin structures. Monomethylation of 'Lys-5' of histone H4 (H4K5me1) is required for subsequent acetylation and formation of N6-acetyl-N6-methyllysine (H4K5acme). The protein is Histone-lysine N-methyltransferase set5 (set5) of Schizosaccharomyces pombe (strain 972 / ATCC 24843) (Fission yeast).